The sequence spans 121 residues: MKSLLLIFLGGGTGSVLRYLLTISIYRQGTTNFPWGTFAVNILGCILIGVFYTLTSRIHINNDIRLMLTIGLCGGFTTFSTFSNESLQLLKSGLYPSFFTYIIGSVVLGILGVMLGIWMSE.

4 helical membrane-spanning segments follow: residues 5–25 (LLIF…TISI), 33–53 (FPWG…VFYT), 66–83 (LMLT…STFS), and 98–118 (FFTY…LGIW). Gly-74 and Thr-77 together coordinate Na(+).

This sequence belongs to the fluoride channel Fluc/FEX (TC 1.A.43) family.

It is found in the cell inner membrane. The enzyme catalyses fluoride(in) = fluoride(out). Na(+) is not transported, but it plays an essential structural role and its presence is essential for fluoride channel function. Fluoride-specific ion channel. Important for reducing fluoride concentration in the cell, thus reducing its toxicity. The polypeptide is Fluoride-specific ion channel FluC (Phocaeicola vulgatus (strain ATCC 8482 / DSM 1447 / JCM 5826 / CCUG 4940 / NBRC 14291 / NCTC 11154) (Bacteroides vulgatus)).